Here is a 1617-residue protein sequence, read N- to C-terminus: Mitogen-activated protein kinase kinae kinase bck1 (1617 aa).

Disordered regions lie at residues 1 to 73, 167 to 199, 211 to 253, 345 to 399, 455 to 555, 568 to 633, 739 to 820, 832 to 1144, and 1164 to 1277; these read MDGQ…SQLQ, GPVHHLYESSGGDGSAYKRDGTVPPTPSARTMP, SVAS…GGMS, RQIH…SPNL, DHRR…SSSY, KRSK…LRGK, GVPL…ISPE, EHKR…RGDI, and DIDL…EILR. Over residues 19-28 the composition is skewed to low complexity; the sequence is TQPSQSHMLS. The span at 44-60 shows a compositional bias: pro residues; the sequence is VMPPPPPGPPPGPPPGP. The segment covering 220–248 has biased composition (polar residues); the sequence is TAQNHQSQTGQTNEPTKSPSHRQNNSNTL. Over residues 482–504 the composition is skewed to polar residues; that stretch reads KSGSPATQHATLNQGLSSSSTGD. The span at 524 to 533 shows a compositional bias: basic and acidic residues; the sequence is RYYESRKGQE. Polar residues-rich tracts occupy residues 535–555 and 586–596; these read IRPSPQEMCSRQWTGETSSSY and ESPTSPVNLRQ. Basic and acidic residues-rich tracts occupy residues 832 to 841 and 871 to 885; these read EHKREVERKQ and FDERRVSPYEDKKAD. 2 stretches are compositionally biased toward polar residues: residues 897–907 and 956–980; these read PQESYTLTRIN and GGKQTNFGSFGSPTQGNTKSAPQSS. Composition is skewed to basic and acidic residues over residues 1128–1140 and 1189–1198; these read EDERPPPRRDSFA and PENDLHKKEN. 2 stretches are compositionally biased toward polar residues: residues 1199–1208 and 1257–1272; these read QPSSSYTGEM and NQASRSRSIHTGNQKS. Positions 1323–1596 constitute a Protein kinase domain; it reads IIRGQLIGKG…QTLLTRHPFC (274 aa). ATP contacts are provided by residues 1329–1337 and K1352; that span reads IGKGTYGRV. Catalysis depends on D1453, which acts as the Proton acceptor.

The protein belongs to the protein kinase superfamily. STE Ser/Thr protein kinase family. MAP kinase kinase subfamily.

The catalysed reaction is L-seryl-[protein] + ATP = O-phospho-L-seryl-[protein] + ADP + H(+). It carries out the reaction L-threonyl-[protein] + ATP = O-phospho-L-threonyl-[protein] + ADP + H(+). Functionally, mitogen-activated kinase kinase kinase (MAPKKK), part of the cell wall integrity (CWI) signaling pathway composed by three protein kinases bck1, mkk2 and mpkA and responsible for the maintaining of cell-wall integrity balance. The CWI pathway also regulates the oxidative stress response, as well as the production of some secondary metabolites including pyomelanin. This Aspergillus fumigatus (strain CBS 144.89 / FGSC A1163 / CEA10) (Neosartorya fumigata) protein is Mitogen-activated protein kinase kinae kinase bck1.